We begin with the raw amino-acid sequence, 440 residues long: tRNA(Ile)-lysidine synthase (440 aa).

Position 19–24 (19–24) interacts with ATP; sequence SGGLDS.

The protein belongs to the tRNA(Ile)-lysidine synthase family.

The protein resides in the cytoplasm. The catalysed reaction is cytidine(34) in tRNA(Ile2) + L-lysine + ATP = lysidine(34) in tRNA(Ile2) + AMP + diphosphate + H(+). Functionally, ligates lysine onto the cytidine present at position 34 of the AUA codon-specific tRNA(Ile) that contains the anticodon CAU, in an ATP-dependent manner. Cytidine is converted to lysidine, thus changing the amino acid specificity of the tRNA from methionine to isoleucine. This chain is tRNA(Ile)-lysidine synthase, found in Buchnera aphidicola subsp. Acyrthosiphon pisum (strain APS) (Acyrthosiphon pisum symbiotic bacterium).